We begin with the raw amino-acid sequence, 278 residues long: 3-oxoacyl-[acyl-carrier-protein] reductase (278 aa).

The NADP(+) site is built by threonine 13, arginine 14, isoleucine 16, serine 36, serine 40, threonine 44, aspartate 66, phenylalanine 67, glutamate 77, glycine 122, glutamine 125, and glutamate 126. The active-site Proton donor is the serine 182. Residues tyrosine 198, lysine 202, leucine 230, and valine 231 each contribute to the NADP(+) site. Tyrosine 198 acts as the Proton acceptor in catalysis. Lysine 202 functions as the Lowers pKa of active site Tyr in the catalytic mechanism.

It belongs to the short-chain dehydrogenases/reductases (SDR) family.

The protein resides in the mitochondrion. It catalyses the reaction a (3R)-hydroxyacyl-[ACP] + NADP(+) = a 3-oxoacyl-[ACP] + NADPH + H(+). The protein operates within lipid metabolism; fatty acid biosynthesis. Functionally, involved in biosynthesis of fatty acids in mitochondria. The sequence is that of 3-oxoacyl-[acyl-carrier-protein] reductase (OAR1) from Saccharomyces cerevisiae (strain ATCC 204508 / S288c) (Baker's yeast).